Consider the following 106-residue polypeptide: MSSSKANQTRVCYQPEDTTFIIIASNGPDVMRWRKDKTVPLTEIVDSFQVFTTSNNKGNEGQLITASKQELENTFGTSKDVDVVTKILTDGKIIPHREHGKHKEVN.

This sequence belongs to the SDO1-like family.

The protein localises to the cytoplasm. The protein resides in the nucleus. In terms of biological role, may play a role in RNA metabolism. This is SDO1-like protein C21C3.19 from Schizosaccharomyces pombe (strain 972 / ATCC 24843) (Fission yeast).